The chain runs to 379 residues: Cytochrome b (379 aa).

Helical transmembrane passes span 33 to 53, 77 to 98, 113 to 133, and 178 to 198; these read FGSLLGMCLVIQILTGLFLAM, WLIRYLHANGASMFFICLFIHV, WNIGIILLLTTMATAFVGYVL, and FFAFHFILPFIIAAFALVHLL. Heme b contacts are provided by H83 and H97. Heme b-binding residues include H182 and H196. H201 lines the a ubiquinone pocket. 4 helical membrane passes run 226–246, 288–308, 320–340, and 347–367; these read TKDLLGIFLLLLVLMILALFF, LGGVLALVLSILILATFPLLN, VTQVIYWIFIANLLVLTWIGG, and FTTIGQIASITYFTIIIILIP.

This sequence belongs to the cytochrome b family. As to quaternary structure, the cytochrome bc1 complex contains 11 subunits: 3 respiratory subunits (MT-CYB, CYC1 and UQCRFS1), 2 core proteins (UQCRC1 and UQCRC2) and 6 low-molecular weight proteins (UQCRH/QCR6, UQCRB/QCR7, UQCRQ/QCR8, UQCR10/QCR9, UQCR11/QCR10 and a cleavage product of UQCRFS1). This cytochrome bc1 complex then forms a dimer. Heme b is required as a cofactor.

Its subcellular location is the mitochondrion inner membrane. Component of the ubiquinol-cytochrome c reductase complex (complex III or cytochrome b-c1 complex) that is part of the mitochondrial respiratory chain. The b-c1 complex mediates electron transfer from ubiquinol to cytochrome c. Contributes to the generation of a proton gradient across the mitochondrial membrane that is then used for ATP synthesis. This Akodon mystax (Caparao grass mouse) protein is Cytochrome b (MT-CYB).